A 38-amino-acid polypeptide reads, in one-letter code: Photosystem II reaction center protein L (38 aa).

A helical membrane pass occupies residues 17–37 (SLFWGLLLIFVLAILFSSYIF).

The protein belongs to the PsbL family. As to quaternary structure, PSII is composed of 1 copy each of membrane proteins PsbA, PsbB, PsbC, PsbD, PsbE, PsbF, PsbH, PsbI, PsbJ, PsbK, PsbL, PsbM, PsbT, PsbX, PsbY, PsbZ, Psb30/Ycf12, at least 3 peripheral proteins of the oxygen-evolving complex and a large number of cofactors. It forms dimeric complexes.

Its subcellular location is the plastid. It localises to the cyanelle thylakoid membrane. Functionally, one of the components of the core complex of photosystem II (PSII). PSII is a light-driven water:plastoquinone oxidoreductase that uses light energy to abstract electrons from H(2)O, generating O(2) and a proton gradient subsequently used for ATP formation. It consists of a core antenna complex that captures photons, and an electron transfer chain that converts photonic excitation into a charge separation. This subunit is found at the monomer-monomer interface and is required for correct PSII assembly and/or dimerization. The protein is Photosystem II reaction center protein L of Cyanophora paradoxa.